The chain runs to 163 residues: uncharacterized protein (163 aa).

This is an uncharacterized protein from Mycoplasma pneumoniae (strain ATCC 29342 / M129 / Subtype 1) (Mycoplasmoides pneumoniae).